The chain runs to 450 residues: UDP-N-acetylmuramoylalanine--D-glutamate ligase (450 aa).

119–125 (GSNGKTT) serves as a coordination point for ATP.

It belongs to the MurCDEF family.

The protein localises to the cytoplasm. It carries out the reaction UDP-N-acetyl-alpha-D-muramoyl-L-alanine + D-glutamate + ATP = UDP-N-acetyl-alpha-D-muramoyl-L-alanyl-D-glutamate + ADP + phosphate + H(+). It participates in cell wall biogenesis; peptidoglycan biosynthesis. Cell wall formation. Catalyzes the addition of glutamate to the nucleotide precursor UDP-N-acetylmuramoyl-L-alanine (UMA). This chain is UDP-N-acetylmuramoylalanine--D-glutamate ligase, found in Bacillus cereus (strain B4264).